The primary structure comprises 283 residues: Acetyl-coenzyme A carboxylase carboxyl transferase subunit beta (283 aa).

Residues 29 to 283 enclose the CoA carboxyltransferase N-terminal domain; that stretch reads LWISCPKCQQ…VKIHSMKGAF (255 aa). C33, C36, C51, and C54 together coordinate Zn(2+). The C4-type zinc finger occupies 33 to 54; sequence CPKCQQSIYHKDLGKYKTCPNC.

It belongs to the AccD/PCCB family. Acetyl-CoA carboxylase is a heterohexamer composed of biotin carboxyl carrier protein (AccB), biotin carboxylase (AccC) and two subunits each of ACCase subunit alpha (AccA) and ACCase subunit beta (AccD). Requires Zn(2+) as cofactor.

The protein resides in the cytoplasm. It catalyses the reaction N(6)-carboxybiotinyl-L-lysyl-[protein] + acetyl-CoA = N(6)-biotinyl-L-lysyl-[protein] + malonyl-CoA. Its pathway is lipid metabolism; malonyl-CoA biosynthesis; malonyl-CoA from acetyl-CoA: step 1/1. Functionally, component of the acetyl coenzyme A carboxylase (ACC) complex. Biotin carboxylase (BC) catalyzes the carboxylation of biotin on its carrier protein (BCCP) and then the CO(2) group is transferred by the transcarboxylase to acetyl-CoA to form malonyl-CoA. This Ligilactobacillus salivarius (strain UCC118) (Lactobacillus salivarius) protein is Acetyl-coenzyme A carboxylase carboxyl transferase subunit beta.